The chain runs to 952 residues: MAPAVAGGGGRRNNEGVNGNAAAPACVCGFPVCACAGAAAVASAASSADMDIVAAGQIGAVNDESWVAVDLSDSDDAPAAGDVQGALDDRPVFRTEKIKGVLLHPYRVLIFVRLIAFTLFVIWRIEHKNPDAMWLWVTSIAGEFWFGFSWLLDQLPKLNPINRVPDLAVLRRRFDHADGTSSLPGLDIFVTTADPIKEPILSTANSILSILAADYPVDRNTCYLSDDSGMLLTYEAMAEAAKFATLWVPFCRKHAIEPRGPESYFELKSHPYMGRAQEEFVNDRRRVRKEYDDFKARINGLEHDIKQRSDSYNAAAGVKDGEPRATWMADGSQWEGTWIEQSENHRKGDHAGIVLVLLNHPSHARQLGPPASADNPLDFSGVDVRLPMLVYVAREKRPGCNHQKKAGAMNALTRASAVLSNSPFILNLDCDHYINNSQALRAGICFMLGRDSDTVAFVQFPQRFEGVDPTDLYANHNRIFFDGTLRALDGLQGPIYVGTGCLFRRITLYGFEPPRINVGGPCFPRLGGMFAKNRYQKPGFEMTKPGAKPVAPPPAATVAKGKHGFLPMPKKAYGKSDAFADTIPRASHPSPYAAEAAVAADEAAIAEAVMVTAAAYEKKTGWGSDIGWVYGTVTEDVVTGYRMHIKGWRSRYCSIYPHAFIGTAPINLTERLFQVLRWSTGSLEIFFSRNNPLFGSTFLHPLQRVAYINITTYPFTALFLIFYTTVPALSFVTGHFIVQRPTTMFYVYLAIVLGTLLILAVLEVKWAGVTVFEWFRNGQFWMTASCSAYLAAVLQVVTKVVFRRDISFKLTSKLPAGDEKKDPYADLYVVRWTWLMITPIIIILVNIIGSAVAFAKVLDGEWTHWLKVAGGVFFNFWVLFHLYPFAKGILGKHGKTPVVVLVWWAFTFVITAVLYINIPHIHGPGRHGAASPSHGHHSAHGTKKYDFTYAWP.

2 consecutive transmembrane segments (helical) span residues L102–I122 and A132–L152. Residue D227 is part of the active site. Residues E278–R308 are a coiled coil. Substrate is bound by residues D429 and D431. The active site involves D636. 6 helical membrane passes run L718–V738, M744–V764, M782–F802, W834–F854, W865–F885, and V898–I918.

The protein belongs to the glycosyltransferase 2 family. Plant cellulose synthase-like F subfamily.

It localises to the golgi apparatus membrane. In terms of biological role, may catalyze both beta-1,3 and beta-1,4 glycosidic linkage on beta-D-glucan. Essential for (1,3;1,4)-beta-D-glucans synthesis in grasses and cereals (Poaceae). The mixed-linked glucans (which are not present in walls of dicotyledons or most other monocotyledonous plants) are particularly important constituents of the walls of the starchy endosperm and aleurone cells of cereal grains such as oats, wheat, rice and barley. They can account for up to 70% by weight of the wall. This Oryza sativa subsp. japonica (Rice) protein is Probable mixed-linked glucan synthase 6 (CSLF6).